The primary structure comprises 412 residues: Arginine biosynthesis bifunctional protein ArgJ (412 aa).

Substrate-binding residues include threonine 162, lysine 188, threonine 199, glutamate 285, asparagine 407, and threonine 412. Threonine 199 acts as the Nucleophile in catalysis.

It belongs to the ArgJ family. As to quaternary structure, heterotetramer of two alpha and two beta chains.

The protein resides in the cytoplasm. It carries out the reaction N(2)-acetyl-L-ornithine + L-glutamate = N-acetyl-L-glutamate + L-ornithine. The catalysed reaction is L-glutamate + acetyl-CoA = N-acetyl-L-glutamate + CoA + H(+). It functions in the pathway amino-acid biosynthesis; L-arginine biosynthesis; L-ornithine and N-acetyl-L-glutamate from L-glutamate and N(2)-acetyl-L-ornithine (cyclic): step 1/1. Its pathway is amino-acid biosynthesis; L-arginine biosynthesis; N(2)-acetyl-L-ornithine from L-glutamate: step 1/4. Functionally, catalyzes two activities which are involved in the cyclic version of arginine biosynthesis: the synthesis of N-acetylglutamate from glutamate and acetyl-CoA as the acetyl donor, and of ornithine by transacetylation between N(2)-acetylornithine and glutamate. The chain is Arginine biosynthesis bifunctional protein ArgJ from Staphylococcus saprophyticus subsp. saprophyticus (strain ATCC 15305 / DSM 20229 / NCIMB 8711 / NCTC 7292 / S-41).